The following is a 423-amino-acid chain: MSFTTRSTTFSTNYRSLGSVRTPSQRVRPASSAASVYAGAGGSGSRISVSRSVWGGSVGSAGLAGMGGVQTEKETMQDLNDRLASYLDKVKNLETENRRLESKIREYLEKRGPQGVRDWGHYFKTIEDLRAQIFANSVDNARIVLQIDNARLAADDFRVKYETELAMRQSVESDIHGLRKVVDDTNITRLQLETEIEALKEELLFMKKNHEEEVQGLEAQIASSGLTVEVDAPKSQDLSKIMADIRAQYEQLAQKNREELDKYWSQQIEESTTVVTTKSAEIRDAETTLLELRRTLQTLEIDLDSMKNQNINLENNLGEVEARYRVQMEQLNGVLLHLESELAQTRAEGQRQTQEYEALLNIKVKLEAEIATYRRLLEDGDDFSLNDALDSSNSMQTVQRTTTRKVVDGKVVSETNDTRVLRH.

Position 2 is an N-acetylserine (Ser2). Residues 2–71 (SFTTRSTTFS…GLAGMGGVQT (70 aa)) form a head region. Phosphoserine occurs at positions 7, 11, 16, and 19. 2 positions are modified to phosphoserine; alternate: Ser31 and Ser32. Residues Ser31 and Ser32 are each glycosylated (O-linked (GlcNAc) serine; alternate). Ser35 bears the Phosphoserine mark. At Tyr37 the chain carries Phosphotyrosine. Position 43 is a phosphoserine (Ser43). Arg46 bears the Omega-N-methylarginine mark. Ser50 is subject to Phosphoserine; alternate. O-linked (GlcNAc) serine; alternate glycosylation occurs at Ser50. Ser52 bears the Phosphoserine; by MAPKAPK2 and MAPKAPK3 mark. A phosphoserine mark is found at Ser57 and Ser60. Positions 62–366 (GLAGMGGVQT…EALLNIKVKL (305 aa)) are necessary for interaction with PNN. An interaction with TRADD region spans residues 69-121 (VQTEKETMQDLNDRLASYLDKVKNLETENRRLESKIREYLEKRGPQGVRDWGH). The tract at residues 72-107 (EKETMQDLNDRLASYLDKVKNLETENRRLESKIREY) is coil 1A. In terms of domain architecture, IF rod spans 72–384 (EKETMQDLND…RLLEDGDDFS (313 aa)). Residue Lys73 forms a Glycyl lysine isopeptide (Lys-Gly) (interchain with G-Cter in SUMO2) linkage. Ser85 bears the Phosphoserine mark. The interval 108-125 (LEKRGPQGVRDWGHYFKT) is linker 1. Lys124 carries the post-translational modification N6-acetyllysine. Residues 126–217 (IEDLRAQIFA…KNHEEEVQGL (92 aa)) form a coil 1B region. Phosphoserine occurs at positions 137 and 170. The interval 218–241 (EAQIASSGLTVEVDAPKSQDLSKI) is linker 12. The interval 236–384 (QDLSKIMADI…RLLEDGDDFS (149 aa)) is interaction with DNAJB6. Lys240 participates in a covalent cross-link: Glycyl lysine isopeptide (Lys-Gly) (interchain with G-Cter in SUMO2). Residues 242–380 (MADIRAQYEQ…ATYRRLLEDG (139 aa)) are coil 2. A Phosphothreonine modification is found at Thr295. Glycyl lysine isopeptide (Lys-Gly) (interchain with G-Cter in SUMO2) cross-links involve residues Lys363 and Lys365. A tail region spans residues 381–423 (DDFSLNDALDSSNSMQTVQRTTTRKVVDGKVVSETNDTRVLRH). A phosphoserine mark is found at Ser384, Ser391, Ser392, and Ser394. The residue at position 397 (Thr397) is a Phosphothreonine. Lys410 participates in a covalent cross-link: Glycyl lysine isopeptide (Lys-Gly) (interchain with G-Cter in SUMO2).

The protein belongs to the intermediate filament family. As to quaternary structure, heterotetramer of two type I and two type II keratins. KRT18 associates with KRT8. Interacts with PNN and mutated CFTR. Interacts with YWHAE, YWHAH and YWHAZ only when phosphorylated. Interacts with DNAJB6, TCHP and TRADD. Interacts with the thrombin-antithrombin complex. Interacts with FAM83H. Interacts with EPPK1. Interacts with PKP1 and PKP2. Post-translationally, phosphorylation increases by IL-6. Proteolytically cleaved by caspases during epithelial cell apoptosis. Cleavage occurs at Asp-231 by either caspase-3, caspase-6 or caspase-7. In terms of processing, dephosphorylated by ethanol. Post-translationally, O-GlcNAcylation increases solubility, and decreases stability by inducing proteasomal degradation. Expressed on the plasma membrane of hepatocytes and in the narrow apical portions of supporting cells in the vomeronasal sensory epithelium. Detected in the type III alveolar cells of the lung, in the proliferative crypt epithelium of the small intestine and in the older intragemmal cells of the tongue.

The protein localises to the nucleus matrix. It is found in the cytoplasm. Its subcellular location is the perinuclear region. The protein resides in the nucleus. It localises to the nucleolus. Its function is as follows. When phosphorylated, plays a role in filament reorganization. Involved in the delivery of mutated CFTR to the plasma membrane. Together with KRT8, is involved in interleukin-6 (IL-6)-mediated barrier protection. Involved in the uptake of thrombin-antithrombin complexes by hepatic cells. The protein is Keratin, type I cytoskeletal 18 of Rattus norvegicus (Rat).